We begin with the raw amino-acid sequence, 702 residues long: Polyribonucleotide nucleotidyltransferase (702 aa).

Positions 487 and 493 each coordinate Mg(2+). The KH domain occupies 554 to 613 (PRLLTIKIHPDKIREVIGKGGSTIQAITKETGTQIDIQDDGTIVIASVNAIAAQAAKARI). The S1 motif domain occupies 623–691 (GRIYEGKVAK…KQGRIRLSMK (69 aa)).

Belongs to the polyribonucleotide nucleotidyltransferase family. Component of the RNA degradosome, which is a multiprotein complex involved in RNA processing and mRNA degradation. Requires Mg(2+) as cofactor.

The protein localises to the cytoplasm. It carries out the reaction RNA(n+1) + phosphate = RNA(n) + a ribonucleoside 5'-diphosphate. In terms of biological role, involved in mRNA degradation. Catalyzes the phosphorolysis of single-stranded polyribonucleotides processively in the 3'- to 5'-direction. The protein is Polyribonucleotide nucleotidyltransferase of Stenotrophomonas maltophilia (strain K279a).